The sequence spans 1302 residues: Zinc finger protein 536 (1302 aa).

Residues 1 to 26 (MEEASLCLGVSSTAPEAEPHLSGPVL) are disordered. 7 consecutive C2H2-type zinc fingers follow at residues 130 to 152 (YPCPLCGKRFRFNSILSLHMRTH), 158 to 180 (FKCPYCDHRAAQKGNLKIHLRTH), 274 to 297 (FRCTFCKGKFKKREELDRHIRILH), 300 to 323 (YKCTLCDFAASQEEELISHVEKAH), 345 to 367 (FRCEVCGQVFSQAWFLKGHMRKH), 373 to 395 (HCCQICGRRFKEPWFLKNHMKVH), and 631 to 653 (TECPDCGRVFRTYHQVVVHSRVH). Residues 650-736 (SRVHKRDRKS…IGEEAGRAGG (87 aa)) form a disordered region. Residues 657–676 (RKSDEDALHVGVGLEERRGS) show a composition bias toward basic and acidic residues. Positions 677 to 698 (GSDQESQSVSRSTTPGSSNVTE) are enriched in polar residues. 2 C2H2-type zinc fingers span residues 753 to 775 (KDCPYCGKTFRTSHHLKVHLRIH) and 781 to 803 (YKCPHCDYAGTQSASLKYHLERH). 4 disordered regions span residues 804–832 (HRERQNGAGPLSGQPPNQEHKDETSSKAP), 855–897 (GPAS…SKSS), 935–988 (KDTK…APTL), and 1133–1261 (NKNT…GLEK). Phosphoserine is present on residues serine 828 and serine 829. The segment covering 869–883 (GDHSGQATGMPSELS) has biased composition (polar residues). Positions 935-973 (KDTKDKVPSDAHPMKAHTAEGGEEKASMKPSQRKSEKSQ) are enriched in basic and acidic residues. Acidic residues-rich tracts occupy residues 1161–1171 (DLSDIASSEDM) and 1179–1188 (NEDEELDTEP). Over residues 1198-1212 (LSKDGSSEGGDSLLS) the composition is skewed to low complexity.

The protein belongs to the krueppel C2H2-type zinc-finger protein family. In terms of tissue distribution, expressed predominantly in the brain, while a weak signal is also detected in the heart and testis. Expression is abundant in neuronal cells of the cerebral cortex, hippocampus and hypothalamic area (at protein level).

It localises to the nucleus. In terms of biological role, transcriptional repressor that negatively regulates neuron differentiation by repressing retinoic acid-induced gene transcription. Binds and interrupts RARA from binding to retinoic acid response elements (RARE) composed of tandem 5'-AGGTCA-3' sites known as DR1-DR5. Recognizes and binds 2 copies of the core DNA sequence 5'-CCCCCA-3'. In Mus musculus (Mouse), this protein is Zinc finger protein 536 (Znf536).